Here is a 558-residue protein sequence, read N- to C-terminus: Pentatricopeptide repeat-containing protein At1g06140, mitochondrial (558 aa).

A mitochondrion-targeting transit peptide spans 1–79; sequence MLPVNRARAL…RNRHSWNTIL (79 aa). 13 PPR repeats span residues 38–68, 71–103, 108–142, 143–173, 174–208, 209–243, 245–275, 276–310, 311–345, 346–376, 377–411, 412–447, and 448–482; these read EVVLGSSLTNAYIQSNRLDFATSSFNRIPCW, NRHSWNTILSGYSKSKTCCYSDVLLLYNRMRRH, DSFNLVFAIKACVGLGLLENGILIHGLAMKNGLDK, DDYVAPSLVEMYAQLGTMESAQKVFDEIPVR, NSVLWGVLMKGYLKYSKDPEVFRLFCLMRDTGLAL, DALTLICLVKACGNVFAGKVGKCVHGVSIRRSFID, SDYLQASIIDMYVKCRLLDNARKLFETSVDR, NVVMWTTLISGFAKCERAVEAFDLFRQMLRESILP, NQCTLAAILVSCSSLGSLRHGKSVHGYMIRNGIEM, DAVNFTSFIDMYARCGNIQMARTVFDMMPER, NVISWSSMINAFGINGLFEEALDCFHKMKSQNVVP, NSVTFVSLLSACSHSGNVKEGWKQFESMTRDYGVVP, and EEEHYACMVDLLGRAGEIGEAKSFIDNMPVKPMAS. A type E motif region spans residues 483–558; it reads AWGALLSACR…HVGQSATEVG (76 aa).

The protein belongs to the PPR family. PCMP-E subfamily.

It localises to the mitochondrion. The polypeptide is Pentatricopeptide repeat-containing protein At1g06140, mitochondrial (PCMP-E61) (Arabidopsis thaliana (Mouse-ear cress)).